The chain runs to 201 residues: Recombination protein RecR (201 aa).

The C4-type zinc-finger motif lies at 56-71 (CKICFNVSSDEVCQYC). The region spanning 79 to 174 (SMICVVEESK…TVSRLASGLP (96 aa)) is the Toprim domain.

It belongs to the RecR family.

In terms of biological role, may play a role in DNA repair. It seems to be involved in an RecBC-independent recombinational process of DNA repair. It may act with RecF and RecO. The protein is Recombination protein RecR of Cutibacterium acnes (strain DSM 16379 / KPA171202) (Propionibacterium acnes).